The primary structure comprises 414 residues: Putative dipeptidase TRV_05564 (414 aa).

The signal sequence occupies residues 1–20 (MAALFVSLLALTSLVPVQGA). Zn(2+)-binding residues include His-45, Asp-47, and Glu-157. An intrachain disulfide couples Cys-96 to Cys-186. Residue His-184 participates in substrate binding. Zn(2+) is bound by residues His-228 and His-249. Substrate is bound by residues Arg-260 and Asp-320. N-linked (GlcNAc...) asparagine glycosylation occurs at Asn-392.

It belongs to the metallo-dependent hydrolases superfamily. Peptidase M19 family. Zn(2+) serves as cofactor.

The enzyme catalyses an L-aminoacyl-L-amino acid + H2O = 2 an L-alpha-amino acid. In terms of biological role, hydrolyzes a wide range of dipeptides. This chain is Putative dipeptidase TRV_05564, found in Trichophyton verrucosum (strain HKI 0517).